The chain runs to 114 residues: PDZK1-interacting protein 1 (114 aa).

Over 1-28 (MSAFGLLILGLLTAVPPASCRQGLGNLQ) the chain is Extracellular. The helical transmembrane segment at 29–51 (PWMQGLIAVAVFLVLVAIAFAVN) threads the bilayer. Residues 52–114 (HFWCQEEPEP…EEGKVRSTPM (63 aa)) lie on the Cytoplasmic side of the membrane. Ser85 carries the phosphoserine modification. Residues 95–114 (HENAYENVPEEEGKVRSTPM) form a disordered region. Basic and acidic residues predominate over residues 105–114 (EEGKVRSTPM).

It belongs to the PDZK1-interacting protein 1/SMIM24 family. Forms a heterodimer (via N-terminal transmembrane helix) with SLC5A2/SGLT2 (via TM13); this interaction enhances SLC5A2 transporter activity. Interacts with PDZK1.

It is found in the apical cell membrane. Auxiliary protein of electrogenic Na(+)-coupled sugar symporter SLC5A2/SGLT2 and SLC5A1/SGLT1. Essential for the transporter activity of SLC5A2/SGLT2 but not SLC5A1/SGLT1. In Pongo abelii (Sumatran orangutan), this protein is PDZK1-interacting protein 1.